The sequence spans 69 residues: MTVPKKRLSSSKKRIRKNIWKGKGHWAALKALSLGKSLSTGNSKSFFRFFSMPTRFFSMPTDNKKTKKS.

This sequence belongs to the bacterial ribosomal protein bL32 family.

Its subcellular location is the plastid. It localises to the chloroplast. This chain is Large ribosomal subunit protein bL32c, found in Pelargonium hortorum (Common geranium).